The chain runs to 264 residues: Major prion protein (264 aa).

The signal sequence occupies residues 1-24 (MVKRHIGSWILVLFVVMWSDVGLC). The tract at residues 25-241 (KKRPKPGGGW…ESQAYYQRGA (217 aa)) is interaction with GRB2, ERI3 and SYN1. The segment at 27 to 119 (RPKPGGGWNT…WNKPSKPKTN (93 aa)) is disordered. Repeat copies occupy residues 54–62 (SQGGGGWGQ), 63–70 (PHGGGWGQ), 71–78 (PHGGGWGQ), 79–86 (PHGGGWGQ), 87–94 (PHGGGWGQ), and 95–103 (PHGGGGWGQ). The segment at 54–103 (SQGGGGWGQPHGGGWGQPHGGGWGQPHGGGWGQPHGGGWGQPHGGGGWGQ) is 6 X 8 AA tandem repeats of P-H-G-G-G-W-G-Q. A compositionally biased stretch (gly residues) spans 55–105 (QGGGGWGQPHGGGWGQPHGGGWGQPHGGGWGQPHGGGWGQPHGGGGWGQGG). 12 residues coordinate Cu(2+): histidine 72, glycine 73, glycine 74, histidine 80, glycine 81, glycine 82, histidine 88, glycine 89, glycine 90, histidine 96, glycine 98, and glycine 99. Residues cysteine 190 and cysteine 225 are joined by a disulfide bond. N-linked (GlcNAc...) asparagine glycans are attached at residues asparagine 192 and asparagine 208. Alanine 241 carries the GPI-anchor amidated alanine lipid modification. Residues 242–264 (SVILFSSPPVILLISLLIFLIVG) constitute a propeptide, removed in mature form.

This sequence belongs to the prion family. Monomer and homodimer. Has a tendency to aggregate into amyloid fibrils containing a cross-beta spine, formed by a steric zipper of superposed beta-strands. Soluble oligomers may represent an intermediate stage on the path to fibril formation. Copper binding may promote oligomerization. Interacts with GRB2, APP, ERI3/PRNPIP and SYN1. Mislocalized cytosolically exposed PrP interacts with MGRN1; this interaction alters MGRN1 subcellular location and causes lysosomal enlargement. Interacts with KIAA1191.

The protein resides in the cell membrane. It localises to the golgi apparatus. Its function is as follows. Its primary physiological function is unclear. Has cytoprotective activity against internal or environmental stresses. May play a role in neuronal development and synaptic plasticity. May be required for neuronal myelin sheath maintenance. May play a role in iron uptake and iron homeostasis. Soluble oligomers are toxic to cultured neuroblastoma cells and induce apoptosis (in vitro). Association with GPC1 (via its heparan sulfate chains) targets PRNP to lipid rafts. Also provides Cu(2+) or Zn(2+) for the ascorbate-mediated GPC1 deaminase degradation of its heparan sulfate side chains. The polypeptide is Major prion protein (PRNP) (Bubalus bubalis (Domestic water buffalo)).